Here is a 422-residue protein sequence, read N- to C-terminus: Metallocarboxypeptidase A-like protein TRV_02598 (422 aa).

The N-terminal stretch at 1-16 is a signal peptide; sequence MQSLLLLATLLGSALG. The propeptide at 17–119 is activation peptide; sequence GAIPSQSANY…ELLTLDGGAN (103 aa). The Peptidase M14 domain occupies 125–421; sequence SYHKYEDHLK…AGVKAMFSKL (297 aa). Zn(2+) contacts are provided by H185 and E188. Substrate is bound by residues 185–188, R240, and 256–257; these read HARE and NR. A disulfide bridge connects residues C250 and C273. A Zn(2+)-binding site is contributed by H311. Residue 312-313 participates in substrate binding; sequence SY. Catalysis depends on E387, which acts as the Proton donor/acceptor.

Belongs to the peptidase M14 family. Requires Zn(2+) as cofactor.

The protein localises to the secreted. Its function is as follows. Extracellular metalloprotease that contributes to pathogenicity. This chain is Metallocarboxypeptidase A-like protein TRV_02598, found in Trichophyton verrucosum (strain HKI 0517).